Reading from the N-terminus, the 450-residue chain is Cell division cycle 20.5, cofactor of APC complex (450 aa).

WD repeat units follow at residues 129–166 (ADDFYLNLLDWGSSNVLAIALGDTVYLWDASSGSTYKL), 171–210 (EEEGPVTSINWTQDGLDLAIGLDNSEVQLWDCVSNRQVRT), 214–251 (GHESRVGSLAWNNHILTTGGMDGKIVNNDVRIRSSIVE), 255–294 (GHTEEVCGLKWSESGKKLASGGNDNVVHIWDHRSVASSNP), 304–346 (EHTA…CLNS), 348–389 (ETGS…KMAE), and 392–431 (GHTSRVLFMAQSPDGCTVASAAGDETLRLWNVFGEPPKTT).

The protein belongs to the WD repeat CDC20/Fizzy family. In terms of assembly, the APC/C is composed of at least 11 subunits that stay tightly associated throughout the cell cycle. Binds to GIG1 and PYM. Part of the mitotic checkpoint complex (MCC); interacts with MAD2 and BUB1.

It localises to the nucleus. It functions in the pathway protein modification; protein ubiquitination. Functionally, component of the anaphase promoting complex/cyclosome (APC/C), a cell cycle-regulated E3 ubiquitin-protein ligase complex that controls progression through mitosis and the G1 phase of the cell cycle. In Arabidopsis thaliana (Mouse-ear cress), this protein is Cell division cycle 20.5, cofactor of APC complex (CDC20-5).